The chain runs to 634 residues: Endoribonuclease rege-1 (634 aa).

Disordered regions lie at residues 1–33 (MDST…STPH), 90–113 (SHPS…APMI), and 156–223 (KMGL…NPDP). Over residues 97–106 (ESSDPSKIDD) the composition is skewed to basic and acidic residues. Composition is skewed to low complexity over residues 182–194 (SSAS…SSSS) and 201–217 (SVSI…STPS). Residues 225 to 377 (LRAVVVDGSN…PSGRHGPRIE (153 aa)) form the RNase NYN domain. Residue Asp314 coordinates Mg(2+). The C3H1-type zinc finger occupies 387–412 (SSNPLVCPYARKCTYGNKCKFYHPER).

This sequence belongs to the ZC3H12 family. Mg(2+) serves as cofactor. As to expression, expressed in the intestinal cells adjacent to the pharynx.

The protein resides in the cytoplasm. Its function is as follows. Endonuclease which binds to the 3'UTR of target mRNAs and induces degradation of the transcript. Acts together with rle-1 to repress the expression of the transcription factor ets-4 by binding to the conserved ADE (alternate decay element) and RCE (REGE-1 cleavage element) stem loop structure in its 3'UTR, which controls the expression of genes in the IIS and TORC1 pathways, including those involved in lipid metabolism and autophagosome formation. May play a role in the clearance of apoptotic cell corpses. The protein is Endoribonuclease rege-1 of Caenorhabditis elegans.